A 447-amino-acid chain; its full sequence is Dihydroorotase (447 aa).

Positions 81 and 83 each coordinate Zn(2+). Residues 83–85 (HFR) and Asn115 each bind substrate. Zn(2+)-binding residues include Asp171, His198, and His252. Residue Asn298 participates in substrate binding. Asp325 is a Zn(2+) binding site. Asp325 is a catalytic residue. Residues His329 and 343–344 (FG) contribute to the substrate site.

The protein belongs to the metallo-dependent hydrolases superfamily. DHOase family. Class I DHOase subfamily. Zn(2+) is required as a cofactor.

It catalyses the reaction (S)-dihydroorotate + H2O = N-carbamoyl-L-aspartate + H(+). Its pathway is pyrimidine metabolism; UMP biosynthesis via de novo pathway; (S)-dihydroorotate from bicarbonate: step 3/3. In terms of biological role, catalyzes the reversible cyclization of carbamoyl aspartate to dihydroorotate. This Ehrlichia chaffeensis (strain ATCC CRL-10679 / Arkansas) protein is Dihydroorotase.